We begin with the raw amino-acid sequence, 513 residues long: Probable tubulin polyglutamylase ttll-15 (513 aa).

A TTL domain is found at 73-411 (VTGSYESAHT…STPITKEADI (339 aa)). ATP is bound by residues 216–219 (QKFV), Lys229, and Asp231.

The protein belongs to the tubulin--tyrosine ligase family. Expressed in hypodermis and pharyngeal muscles.

In terms of biological role, probable polyglutamylase that forms polyglutamate side chains on tubulin. Probably acts when complexed with other proteins. Appears to be dispensable for polar spindle formation in dividing embryonic cells, for cilia-dependent osmotic avoidance and for male mating behavior. Regulates microtubule dynamics in uterine muscle cells. The sequence is that of Probable tubulin polyglutamylase ttll-15 from Caenorhabditis elegans.